A 321-amino-acid polypeptide reads, in one-letter code: Lipoyl synthase (321 aa).

Cysteine 68, cysteine 73, cysteine 79, cysteine 94, cysteine 98, cysteine 101, and serine 308 together coordinate [4Fe-4S] cluster. The Radical SAM core domain occupies phenylalanine 80–threonine 297.

The protein belongs to the radical SAM superfamily. Lipoyl synthase family. The cofactor is [4Fe-4S] cluster.

It localises to the cytoplasm. It carries out the reaction [[Fe-S] cluster scaffold protein carrying a second [4Fe-4S](2+) cluster] + N(6)-octanoyl-L-lysyl-[protein] + 2 oxidized [2Fe-2S]-[ferredoxin] + 2 S-adenosyl-L-methionine + 4 H(+) = [[Fe-S] cluster scaffold protein] + N(6)-[(R)-dihydrolipoyl]-L-lysyl-[protein] + 4 Fe(3+) + 2 hydrogen sulfide + 2 5'-deoxyadenosine + 2 L-methionine + 2 reduced [2Fe-2S]-[ferredoxin]. It participates in protein modification; protein lipoylation via endogenous pathway; protein N(6)-(lipoyl)lysine from octanoyl-[acyl-carrier-protein]: step 2/2. In terms of biological role, catalyzes the radical-mediated insertion of two sulfur atoms into the C-6 and C-8 positions of the octanoyl moiety bound to the lipoyl domains of lipoate-dependent enzymes, thereby converting the octanoylated domains into lipoylated derivatives. The sequence is that of Lipoyl synthase from Aliivibrio salmonicida (strain LFI1238) (Vibrio salmonicida (strain LFI1238)).